We begin with the raw amino-acid sequence, 279 residues long: NADPH-dependent 7-cyano-7-deazaguanine reductase (279 aa).

86–88 (IES) contacts substrate. NADPH is bound at residue 88 to 89 (SK). Cys187 functions as the Thioimide intermediate in the catalytic mechanism. Catalysis depends on Asp194, which acts as the Proton donor. 226-227 (HE) provides a ligand contact to substrate. 255–256 (RG) contributes to the NADPH binding site.

It belongs to the GTP cyclohydrolase I family. QueF type 2 subfamily. As to quaternary structure, homodimer.

The protein localises to the cytoplasm. The enzyme catalyses 7-aminomethyl-7-carbaguanine + 2 NADP(+) = 7-cyano-7-deazaguanine + 2 NADPH + 3 H(+). The protein operates within tRNA modification; tRNA-queuosine biosynthesis. Its function is as follows. Catalyzes the NADPH-dependent reduction of 7-cyano-7-deazaguanine (preQ0) to 7-aminomethyl-7-deazaguanine (preQ1). This chain is NADPH-dependent 7-cyano-7-deazaguanine reductase, found in Pasteurella multocida (strain Pm70).